A 465-amino-acid chain; its full sequence is Monogalactosyldiacylglycerol synthase 3, chloroplastic (465 aa).

Residues H86, R255, 365 to 369, and E387 contribute to the UDP site; that span reads GTIAE.

Belongs to the glycosyltransferase 28 family. In terms of tissue distribution, expressed mainly in roots. Detected in flowers, leaves, stems, siliques and pollen tubes.

The protein localises to the plastid. It localises to the chloroplast outer membrane. The enzyme catalyses a 1,2-diacyl-sn-glycerol + UDP-alpha-D-galactose = a 1,2-diacyl-3-O-(beta-D-galactosyl)-sn-glycerol + UDP + H(+). It carries out the reaction 1,2-di-(9Z,12Z-octadecadienoyl)-sn-glycerol + UDP-alpha-D-galactose = 1,2-di-(9Z,12Z-octadecadienoyl)-3-beta-D-galactosyl-sn-glycerol + UDP + H(+). It catalyses the reaction 1-(9Z-octadecenoyl)-2-hexadecanoyl-sn-glycerol + UDP-alpha-D-galactose = 1-(9Z-octadecenoyl)-2-hexadecanoyl-3-beta-D-galactosyl-sn-glycerol + UDP + H(+). The catalysed reaction is 1,2-di-(9Z-octadecenoyl)-sn-glycerol + UDP-alpha-D-galactose = 1,2-di-(9Z-octadecenoyl)-3-beta-D-galactosyl-sn-glycerol + UDP + H(+). Its activity is regulated as follows. Inhibited by galvestine-1. Functionally, involved in the synthesis of monogalactosyldiacylglycerol, the major structural component of photosynthetic membranes and in the chloroplast envelope biogenesis. Can use both prokaryotic (18:1/16:0) or eukaryotic (18:2/18:2) 1,2-diacylglycerol species, but operates with some preference for the eukaryotic one. Plays a minor role in galactolipid synthesis in chloroplasts. Is essential for membrane lipid remodeling in phosphate-starved roots. Acts as the major factor involved in digalactosyldiacylglycerol (DGDG) biosynthesis in phosphate-starved roots. Does not seem to be required for plant growth under nutrient-sufficient conditions. Required for membrane lipid remodeling in plants grown in acidic conditions. The sequence is that of Monogalactosyldiacylglycerol synthase 3, chloroplastic from Arabidopsis thaliana (Mouse-ear cress).